A 687-amino-acid chain; its full sequence is TWiK family of potassium channels protein 12 (687 aa).

Over 1–21 the chain is Cytoplasmic; the sequence is MTLFQKLQWFCQLIRLRAYYK. The chain crosses the membrane as a helical span at residues 22-42; the sequence is FLLLIAYTLFGAWLFRFYELQ. N-linked (GlcNAc...) asparagine glycosylation is found at asparagine 53, asparagine 77, and asparagine 98. Residues 112–132 constitute an intramembrane region (pore-forming); sequence WTWTGAMFYAGQLYTTIGYGY. Residues 142–162 form a helical membrane-spanning segment; that stretch reads ICTVLYALFGIPCFLMYLKAI. Residues 163-212 are Cytoplasmic-facing; that stretch reads GKTLSKRLKKIYKRVRRSAFGKFLLPTRVTATKDGFEDPDASAEERKRKP. A helical transmembrane segment spans residues 213-233; it reads FPIPIAIILLIIWICFSASMF. An intramembrane region (pore-forming) is located at residues 242–262; the sequence is FPSAVYFFIVSISTVGLGDML. A helical transmembrane segment spans residues 270-290; that stretch reads VFNFLLILFGLALLSMCFELI. Over 291 to 687 the chain is Cytoplasmic; sequence TDRIAKWKQK…SKRDAPVNIV (397 aa). A disordered region spans residues 661–687; the sequence is SPSTSTSTSMIDSGYDLSKRDAPVNIV. The segment covering 677–687 has biased composition (basic and acidic residues); the sequence is LSKRDAPVNIV.

Belongs to the two pore domain potassium channel (TC 1.A.1.8) family.

The protein localises to the membrane. The polypeptide is TWiK family of potassium channels protein 12 (Caenorhabditis briggsae).